We begin with the raw amino-acid sequence, 408 residues long: Apoptosis-inducing factor homolog A (408 aa).

Residues 34–38 (GCGFG), arginine 69, and aspartate 314 contribute to the FAD site.

The protein belongs to the FAD-dependent oxidoreductase family. It depends on FAD as a cofactor.

Putative FAD-dependent oxidoreductase. In Dictyostelium discoideum (Social amoeba), this protein is Apoptosis-inducing factor homolog A (aifA).